The following is a 130-amino-acid chain: Riboflavin kinase (130 aa).

Residue 12–17 participates in CDP binding; it reads GLGVGA. Residues T39 and N41 each contribute to the Mg(2+) site. FMN is bound by residues T90 and E98. 103 to 106 provides a ligand contact to CDP; that stretch reads KNLR.

It belongs to the archaeal riboflavin kinase family. Requires Mg(2+) as cofactor.

It carries out the reaction riboflavin + CTP = CDP + FMN + H(+). Its pathway is cofactor biosynthesis; FMN biosynthesis; FMN from riboflavin (CTP route): step 1/1. Catalyzes the CTP-dependent phosphorylation of riboflavin (vitamin B2) to form flavin mononucleotide (FMN). The protein is Riboflavin kinase of Staphylothermus marinus (strain ATCC 43588 / DSM 3639 / JCM 9404 / F1).